Here is a 296-residue protein sequence, read N- to C-terminus: Protein RarD (296 aa).

Residues 1 to 11 lie on the Cytoplasmic side of the membrane; sequence MDAKQTRQGVL. Residues 12–34 form a helical membrane-spanning segment; sequence LALAAYFIWGIAPAYFKLIYYVP. Positions 18–145 constitute an EamA domain; the sequence is FIWGIAPAYF…AICGVLVQLW (128 aa). Over 35–37 the chain is Periplasmic; the sequence is ADE. The chain crosses the membrane as a helical span at residues 38 to 60; the sequence is ILTHRVIWSFFFMVVLMSICRQW. Residues 61 to 72 lie on the Cytoplasmic side of the membrane; it reads SYLKTLIQTPQK. The helical transmembrane segment at 73-95 threads the bilayer; it reads IFMLAVSAVLIGGNWLLFIWAVN. The Periplasmic segment spans residues 96-99; the sequence is NHHM. Residues 100–122 form a helical membrane-spanning segment; the sequence is LEASLGYFINPLVNIVLGMIFLG. Topologically, residues 123–128 are cytoplasmic; it reads ERFRRM. A helical transmembrane segment spans residues 129–146; it reads QWLAVILAICGVLVQLWT. The Periplasmic segment spans residues 147–149; sequence FGS. Residues 150-167 form a helical membrane-spanning segment; the sequence is LPIIALGLAFSFAFYGLV. The Cytoplasmic portion of the chain corresponds to 168 to 179; the sequence is RKKIAVEAQTGM. A helical membrane pass occupies residues 180-197; it reads LIETMWLLPVAAIYLFAI. At 198–211 the chain is on the periplasmic side; it reads ADSSTSHMGQNPMS. Residues 212-234 form a helical membrane-spanning segment; that stretch reads LNLLLIAAGIVTTVPLLCFTAAA. Residues 235 to 238 are Cytoplasmic-facing; that stretch reads TRLR. A helical transmembrane segment spans residues 239–261; that stretch reads LSTLGFFQYIGPTLMFLLAVTFY. Residues 262–270 are Periplasmic-facing; it reads GEKPGADKM. Residues 271–290 traverse the membrane as a helical segment; that stretch reads VTFAFIWVALAIFVMDAIYT. The Cytoplasmic segment spans residues 291–296; it reads QRRTSK.

The protein belongs to the EamA transporter family.

The protein resides in the cell inner membrane. The sequence is that of Protein RarD (rarD) from Escherichia coli (strain K12).